A 414-amino-acid chain; its full sequence is MSGASSGTAIGAHLFGVSPECRVLIGDEGAGPSKSLSEVSFSVWYQSRAARLVIFCLVASFLVPCLTFLIAETVMGQTIATPLSLTLDHWSEVRARAHNQGVEVRKKKWVTLCEAEWVMMNVGWPREGTFSLDNISQVEKKIFAPGPYGHPDQVPYITTWRSLATDPPSWVRPFLPPPKPPTPLPQPLSPQPSAPLTSSLYPVLPKTDPPKPPVLPPDPSSPLIDLLTEEPPPYPGGHGPLPSGPRTPTASPIASRLRERRENPAEESQALPLREGPNNRPQYWPFSASDLYNWKSHNPPFSQDPVALTNLIESILVTHQPTWDDCQQLLQALLTGEERQRVLLEARKQVPGEDGRPTQLPNVIDETFPLTRPNWDFATPAGREHLRLYRQLLLAGLRGAARRPTNLAQVKQVV.

Residues 1-51 lie on the Cytoplasmic side of the membrane; it reads MSGASSGTAIGAHLFGVSPECRVLIGDEGAGPSKSLSEVSFSVWYQSRAAR. Residues 52 to 72 traverse the membrane as a helical segment; that stretch reads LVIFCLVASFLVPCLTFLIAE. Residues 73–414 lie on the Extracellular side of the membrane; sequence TVMGQTIATP…TNLAQVKQVV (342 aa). The N-linked (GlcNAc...) asparagine; by host glycan is linked to Asn-134. A disordered region spans residues 171–282; it reads VRPFLPPPKP…LREGPNNRPQ (112 aa). A compositionally biased stretch (pro residues) spans 174-193; it reads FLPPPKPPTPLPQPLSPQPS. A compositionally biased stretch (low complexity) spans 194-206; the sequence is APLTSSLYPVLPK. Over residues 210-220 the composition is skewed to pro residues; it reads PKPPVLPPDPS.

Post-translationally, glycosylated by host. In terms of processing, cleaved by host near the middle of the molecule, releasing the c-terminal half containing capsid and nucleoprotein domains op GAG.

It is found in the host cell membrane. In terms of biological role, plays a role in viral particle release. Presumably acts by facilitating the fission of the virion bud at the cell surface. This chain is Glyco-Gag protein, found in Felidae (cat family).